The sequence spans 379 residues: Flagellin A (379 aa).

2 coiled-coil regions span residues 104-129 (NSAS…IAET) and 314-341 (QNRL…IKDT).

It belongs to the bacterial flagellin family. Heteromer of multiple flagellin subunits including FlaA, FlaB, FlaC, FlaD and FlaE.

The protein resides in the secreted. It localises to the bacterial flagellum. Functionally, flagellin is the subunit protein which polymerizes to form the filaments of bacterial flagella. FlaA is required to form a core or scaffold into which the other flagellins are inserted to provide structural integrity. Essential for flagellar synthesis and motility; important for full virulence. In Vibrio cholerae serotype O1 (strain ATCC 39541 / Classical Ogawa 395 / O395), this protein is Flagellin A (flaA).